The sequence spans 512 residues: Cytochrome P450 98A1 (512 aa).

A helical membrane pass occupies residues 3 to 23 (ASLLLSVALAVVLIPLSLALL). Cys-441 contacts heme.

This sequence belongs to the cytochrome P450 family. Requires heme as cofactor.

Its subcellular location is the membrane. This chain is Cytochrome P450 98A1 (CYP98A1), found in Sorghum bicolor (Sorghum).